The following is a 105-amino-acid chain: Small ribosomal subunit protein uS10 (105 aa).

The protein belongs to the universal ribosomal protein uS10 family. As to quaternary structure, part of the 30S ribosomal subunit.

Its function is as follows. Involved in the binding of tRNA to the ribosomes. In Rickettsia akari (strain Hartford), this protein is Small ribosomal subunit protein uS10.